Reading from the N-terminus, the 298-residue chain is Ribosomal RNA small subunit methyltransferase H (298 aa).

S-adenosyl-L-methionine-binding positions include 38 to 40 (GGH), D57, F84, D100, and Q107.

Belongs to the methyltransferase superfamily. RsmH family.

It is found in the cytoplasm. It catalyses the reaction cytidine(1402) in 16S rRNA + S-adenosyl-L-methionine = N(4)-methylcytidine(1402) in 16S rRNA + S-adenosyl-L-homocysteine + H(+). Its function is as follows. Specifically methylates the N4 position of cytidine in position 1402 (C1402) of 16S rRNA. In Acaryochloris marina (strain MBIC 11017), this protein is Ribosomal RNA small subunit methyltransferase H.